Here is a 554-residue protein sequence, read N- to C-terminus: Capsid vertex component 2 (554 aa).

The tract at residues 1-46 (MTQLSLFYQFPIQPIFEGHVRNTLICTEEDMQQLQNLGIRKLRKEK) is interaction with major capsid protein/MCP.

Belongs to the herpesviridae CVC2 protein family. Heterodimerizes with CVC1. Interacts with major capsid protein/MCP and triplex capsid protein 1/TRX1 at the pentamer vertices. Interacts with the large tegument protein/LTP.

It localises to the virion. It is found in the host nucleus. In terms of biological role, capsid vertex-specific component that plays a role during viral DNA encapsidation, assuring correct genome cleavage and presumably stabilizing capsids that contain full-length viral genomes. Participates in the interaction between the capsid and the tegument through interaction with the large tegument protein/LTP. This is Capsid vertex component 2 from Human herpesvirus 7 (strain JI) (HHV-7).